The chain runs to 149 residues: Transcriptional repressor NrdR (149 aa).

The segment at 3 to 34 (CPFCSIQETKVIDSRLVADGHQVRRRRECTMC) is a zinc-finger region. An ATP-cone domain is found at 49-139 (PRVVKRDGSR…VYRSFEDIRE (91 aa)).

The protein belongs to the NrdR family. Zn(2+) is required as a cofactor.

Its function is as follows. Negatively regulates transcription of bacterial ribonucleotide reductase nrd genes and operons by binding to NrdR-boxes. In Pseudoalteromonas atlantica (strain T6c / ATCC BAA-1087), this protein is Transcriptional repressor NrdR.